Reading from the N-terminus, the 431-residue chain is uncharacterized protein (431 aa).

Disordered regions lie at residues 1-37 and 102-132; these read MFWRRLRPGAQDLAPKGLPGDGDFRRSSDPRLPKLTP and PPPLLSAGASRESAPRQPGPGERERPRRRVA. Basic and acidic residues predominate over residues 22 to 32; it reads GDFRRSSDPRL. A compositionally biased stretch (low complexity) spans 106–121; that stretch reads LSAGASRESAPRQPGP. Residues 122–132 show a composition bias toward basic and acidic residues; that stretch reads GERERPRRRVA.

Its subcellular location is the cytoplasm. This is an uncharacterized protein from Homo sapiens (Human).